The primary structure comprises 308 residues: D-alanine--D-alanine ligase (308 aa).

Residues 102–302 enclose the ATP-grasp domain; sequence KKVAAAAGIP…FGDLVSWMVE (201 aa). 128-183 contributes to the ATP binding site; the sequence is PLQPPYVVKPVREGSSFGVVIVKEDQSHPPQILTSSEWPFGNQVMVERYIHGRELT. Mg(2+) is bound by residues D252, E269, and N271.

It belongs to the D-alanine--D-alanine ligase family. Mg(2+) serves as cofactor. The cofactor is Mn(2+).

It is found in the cytoplasm. The enzyme catalyses 2 D-alanine + ATP = D-alanyl-D-alanine + ADP + phosphate + H(+). It functions in the pathway cell wall biogenesis; peptidoglycan biosynthesis. Functionally, cell wall formation. The protein is D-alanine--D-alanine ligase of Agrobacterium fabrum (strain C58 / ATCC 33970) (Agrobacterium tumefaciens (strain C58)).